Reading from the N-terminus, the 245-residue chain is 1-(5-phosphoribosyl)-5-[(5-phosphoribosylamino)methylideneamino] imidazole-4-carboxamide isomerase (245 aa).

Aspartate 7 serves as the catalytic Proton acceptor. The active-site Proton donor is the aspartate 129.

The protein belongs to the HisA/HisF family.

It is found in the cytoplasm. It catalyses the reaction 1-(5-phospho-beta-D-ribosyl)-5-[(5-phospho-beta-D-ribosylamino)methylideneamino]imidazole-4-carboxamide = 5-[(5-phospho-1-deoxy-D-ribulos-1-ylimino)methylamino]-1-(5-phospho-beta-D-ribosyl)imidazole-4-carboxamide. Its pathway is amino-acid biosynthesis; L-histidine biosynthesis; L-histidine from 5-phospho-alpha-D-ribose 1-diphosphate: step 4/9. In Salmonella heidelberg (strain SL476), this protein is 1-(5-phosphoribosyl)-5-[(5-phosphoribosylamino)methylideneamino] imidazole-4-carboxamide isomerase.